Consider the following 199-residue polypeptide: Protein CPL1 (199 aa).

The signal sequence occupies residues 1–30 (MFSIPPSVRRLVFLFLIAAPLLSIVLPVAA). Residues 34–58 (GVDPPSKLQPRAPQPSRRMGATKRS) form a disordered region. An N-linked (GlcNAc...) asparagine glycan is attached at N148.

Its subcellular location is the secreted. Virulence factor which promotes fungal virulence by enhancing type 2 inflammation in the mouse host. Likely binds mouse Tlr4 independently of Ly96/Md2 and activates Tlr4 signaling to drive Stat3 phosphorylation in interstitial macrophages, which promotes the initial induction of Arg1/arginase-1 and increases macrophage sensitivity to Il4 signaling. The polypeptide is Protein CPL1 (Cryptococcus neoformans var. grubii serotype A (strain H99 / ATCC 208821 / CBS 10515 / FGSC 9487) (Filobasidiella neoformans var. grubii)).